Here is a 432-residue protein sequence, read N- to C-terminus: Adenylosuccinate synthetase (432 aa).

GTP is bound by residues 13–19 and 41–43; these read GDEGKGK and GHT. D14 serves as the catalytic Proton acceptor. Residues D14 and G41 each coordinate Mg(2+). IMP-binding positions include 14 to 17, 39 to 42, T130, R144, Q225, T240, and R304; these read DEGK and NAGH. The active-site Proton donor is H42. 300 to 306 contributes to the substrate binding site; sequence ATTGRRR. GTP is bound by residues R306, 332 to 334, and 415 to 417; these read KLD and STG.

This sequence belongs to the adenylosuccinate synthetase family. Homodimer. The cofactor is Mg(2+).

The protein localises to the cytoplasm. It carries out the reaction IMP + L-aspartate + GTP = N(6)-(1,2-dicarboxyethyl)-AMP + GDP + phosphate + 2 H(+). Its pathway is purine metabolism; AMP biosynthesis via de novo pathway; AMP from IMP: step 1/2. Plays an important role in the de novo pathway of purine nucleotide biosynthesis. Catalyzes the first committed step in the biosynthesis of AMP from IMP. The chain is Adenylosuccinate synthetase from Salmonella choleraesuis (strain SC-B67).